The sequence spans 242 residues: Terpene cyclase dpchB (242 aa).

Helical transmembrane passes span 16-36, 51-71, 78-95, 114-134, 141-161, 169-189, and 207-227; these read VVWIADTCKLIMGIGWTANYV, ALLPLCCNFAWELTYAIMYAF, YVHFSGLLLNCGVMYTAV, LIFVLAVAGFASAHVVLAKQV, AWSAYACQLLLSVGGLCQLLC, SYFLWFSRFFGSLVLVPQDII, and IWFVTIFLILDGSYGLCLWYV.

Belongs to the paxB family.

The protein localises to the membrane. It functions in the pathway secondary metabolite biosynthesis; terpenoid biosynthesis. Functionally, terpene cyclase; part of the gene cluster that mediates the biosynthesis of the diterpenoid pyrones higginsianins A and B. The first step of the pathway is the synthesis of the alpha-pyrone moiety by the polyketide synthase dpchA via condensation of one acetyl-CoA starter unit with 3 malonyl-CoA units and 2 methylations. The alpha-pyrone is then combined with geranylgeranyl pyrophosphate (GGPP) formed by the GGPP synthase dpchD through the action of the prenyltransferase dpchC to yield a linear alpha-pyrone diterpenoid. Subsequent steps in the diterpenoid pyrone biosynthetic pathway involve the decalin core formation, which is initiated by the epoxidation of the C10-C11 olefin by the FAD-dependent oxidoreductase dpchE, and is followed by a cyclization cascade catalyzed by the terpene cyclase dpchB. The short chain dehydrogenase/reductase dpchG then oxidizes the 8S hydroxy group to a ketone and the short chain dehydrogenase/reductase dpchH reduces the ketone to the 8R hydroxy group to yield higginsianin B. Finally, the FAD-dependent oxidoreductase dpchF converts higginsianin B into higginsianin A. The chain is Terpene cyclase dpchB from Colletotrichum higginsianum (strain IMI 349063) (Crucifer anthracnose fungus).